The sequence spans 769 residues: Wall-associated receptor kinase-like 10 (769 aa).

Positions 1-24 (MSSNCSCSLLSLFSLLLIIDLTVA) are cleaved as a signal peptide. Residues 25 to 358 (SSCPKTCGGI…YTCEYTNHRP (334 aa)) are Extracellular-facing. Residues N58, N114, N134, N182, N187, N237, N262, and N296 are each glycosylated (N-linked (GlcNAc...) asparagine). Residues 291–351 (CLCDYNSTTT…CVNLLGGYTC (61 aa)) form an atypical EGF-like region. 3 cysteine pairs are disulfide-bonded: C293–C305, C327–C342, and C337–C351. Residues 359–379 (LVIGLSTSFSTLVFIGGIYWL) traverse the membrane as a helical segment. At 380-769 (YKFIRRQRRL…RSDVEPLFPR (390 aa)) the chain is on the cytoplasmic side. The Protein kinase domain occupies 433 to 718 (FSLTRILGEG…SYSEDMQPYE (286 aa)). Residues 439–447 (LGEGGQGTV) and K461 contribute to the ATP site. The residue at position 506 (Y506) is a Phosphotyrosine. D559 functions as the Proton acceptor in the catalytic mechanism. 2 positions are modified to phosphothreonine: T593 and T598. Position 606 is a phosphotyrosine (Y606).

It belongs to the protein kinase superfamily. Ser/Thr protein kinase family.

The protein resides in the membrane. It catalyses the reaction L-seryl-[protein] + ATP = O-phospho-L-seryl-[protein] + ADP + H(+). The catalysed reaction is L-threonyl-[protein] + ATP = O-phospho-L-threonyl-[protein] + ADP + H(+). Its function is as follows. Serine/threonine-protein kinase that may function as a signaling receptor of extracellular matrix component. The polypeptide is Wall-associated receptor kinase-like 10 (WAKL10) (Arabidopsis thaliana (Mouse-ear cress)).